A 365-amino-acid polypeptide reads, in one-letter code: PR domain zinc finger protein 12 (365 aa).

The 118-residue stretch at 86 to 203 folds into the SET domain; sequence VEVIIAQSSI…PDQELLVWYG (118 aa). C2H2-type zinc fingers lie at residues 243 to 265, 271 to 293, and 299 to 323; these read MRCV…MRIH, FVCR…VRLH, and YKCQ…SARH. The interval 318–338 is disordered; the sequence is QKSARHRPPSTALQAHSPALP. Over residues 329–338 the composition is skewed to low complexity; the sequence is ALQAHSPALP.

The protein belongs to the class V-like SAM-binding methyltransferase superfamily. As to quaternary structure, interacts with EHMT2.

The protein localises to the nucleus. Transcriptional regulator necessary for the development of nociceptive neurons, playing a key role in determining the nociceptive lineage from neural crest cell progenitors. Initiates neurogenesis and activates downstream pro-neuronal transcription factors, such as NEUROD1, BRN3A, and ISL1, specifically within nociceptive neurons, while repressing non-nociceptor cell fates. Essential for the proper function of nociceptors in adults, influencing both their excitability and their gene expression, thereby impacting how these neurons respond to various pain stimuli. The sequence is that of PR domain zinc finger protein 12 (Prdm12) from Mus musculus (Mouse).